A 416-amino-acid chain; its full sequence is Neurotensin receptor type 2 (416 aa).

At 1–32 (METSSLWPPRPSPSAGLSLEARLGVDTRLWAK) the chain is on the extracellular side. A helical membrane pass occupies residues 33–55 (VLFTALYSLIFALGTAGNALSVH). At 56 to 64 (VVLKARAGR) the chain is on the cytoplasmic side. Residues 65–87 (PGRLRYHVLSLALSALLLLLISV) traverse the membrane as a helical segment. Residues 88 to 109 (PMELYNFVWSHYPWVFGDLGCR) are Extracellular-facing. The cysteines at positions 108 and 194 are disulfide-linked. Residues 110–131 (GYYFVRELCAYATVLSVASLSA) form a helical membrane-spanning segment. At 132-154 (ERCLAVCQPLRARRLLTPRRTRR) the chain is on the cytoplasmic side. Residues 155 to 176 (LLSLVWVASLGLALPMAVIMGQ) form a helical membrane-spanning segment. Topologically, residues 177–217 (KHEMERADGEPEPASRVCTVLVSRATLQVFIQVNVLVSFVL) are extracellular. The chain crosses the membrane as a helical span at residues 218-237 (PLALTAFLNGITVNHLVALY). Over 238-297 (SQVPSASAQVNSIPSRLELLSEEGLLGFITWRKTLSLGVQASLVRHKDASQIRSLQHSAQ) the chain is Cytoplasmic. The chain crosses the membrane as a helical span at residues 298 to 318 (VLRAIVAVYVICWLPYHARRL). At 319 to 337 (MYCYIPDDGWTDELYDFYH) the chain is on the extracellular side. The helical transmembrane segment at 338 to 358 (YFYMVTNTLFYVSSAVTPVLY) threads the bilayer. At 359–416 (NAVSSSFRKLFLESLSSLCGEQRSVVPLPQEAPESTTSTYSFRLWGSPRNPSLGEIQV) the chain is on the cytoplasmic side. C377 is lipidated: S-palmitoyl cysteine. Residue S410 is modified to Phosphoserine.

The protein belongs to the G-protein coupled receptor 1 family. Neurotensin receptor subfamily. NTSR2 sub-subfamily. Expressed maximally in the cerebellum, hippocampus, piriform cortex and neocortex of adult brain.

It is found in the cell membrane. In terms of biological role, receptor for the tridecapeptide neurotensin. It is associated with G proteins that activate a phosphatidylinositol-calcium second messenger system. This chain is Neurotensin receptor type 2 (Ntsr2), found in Mus musculus (Mouse).